The primary structure comprises 149 residues: Ribonuclease pancreatic (149 aa).

Positions 1 to 25 are cleaved as a signal peptide; sequence MGLEKSLILFPLFFLLLGWVQPSLG. The substrate site is built by lysine 32 and arginine 35. The active-site Proton acceptor is the histidine 37. 4 disulfides stabilise this stretch: cysteine 51/cysteine 109, cysteine 65/cysteine 120, cysteine 83/cysteine 135, and cysteine 90/cysteine 97. Residues 66 to 70 and lysine 91 contribute to the substrate site; that span reads KPVNT. Catalysis depends on histidine 144, which acts as the Proton donor.

The protein belongs to the pancreatic ribonuclease family. Monomer. Interacts with and forms tight 1:1 complexes with RNH1. Dimerization of two such complexes may occur. Interaction with RNH1 inhibits this protein. In terms of tissue distribution, pancreas.

The protein resides in the secreted. It catalyses the reaction an [RNA] containing cytidine + H2O = an [RNA]-3'-cytidine-3'-phosphate + a 5'-hydroxy-ribonucleotide-3'-[RNA].. It carries out the reaction an [RNA] containing uridine + H2O = an [RNA]-3'-uridine-3'-phosphate + a 5'-hydroxy-ribonucleotide-3'-[RNA].. In terms of biological role, endonuclease that catalyzes the cleavage of RNA on the 3' side of pyrimidine nucleotides. Acts on single-stranded and double-stranded RNA. In Mus musculus (Mouse), this protein is Ribonuclease pancreatic (Rnase1).